The chain runs to 63 residues: uncharacterized protein (63 aa).

This is an uncharacterized protein from Acidianus bottle-shaped virus (isolate Italy/Pozzuoli) (ABV).